The following is a 1401-amino-acid chain: DNA polymerase III PolC-type (1401 aa).

Residues 388–543 enclose the Exonuclease domain; sequence FVVFDIETTG…EDAKATAEIF (156 aa).

It belongs to the DNA polymerase type-C family. PolC subfamily.

The protein localises to the cytoplasm. The enzyme catalyses DNA(n) + a 2'-deoxyribonucleoside 5'-triphosphate = DNA(n+1) + diphosphate. Functionally, required for replicative DNA synthesis. This DNA polymerase also exhibits 3' to 5' exonuclease activity. The chain is DNA polymerase III PolC-type from Caldanaerobacter subterraneus subsp. tengcongensis (strain DSM 15242 / JCM 11007 / NBRC 100824 / MB4) (Thermoanaerobacter tengcongensis).